A 546-amino-acid chain; its full sequence is 2-isopropylmalate synthase (546 aa).

The region spanning 8-271 (ILIFDTTLRD…NSFFGRSSDS (264 aa)) is the Pyruvate carboxyltransferase domain. Mn(2+) contacts are provided by Asp-17, His-208, His-210, and Asn-244. The tract at residues 408 to 546 (QLSHVQVSCG…KNKVLSNPKK (139 aa)) is regulatory domain.

The protein belongs to the alpha-IPM synthase/homocitrate synthase family. LeuA type 1 subfamily. In terms of assembly, homodimer. Mn(2+) is required as a cofactor.

The protein localises to the cytoplasm. It catalyses the reaction 3-methyl-2-oxobutanoate + acetyl-CoA + H2O = (2S)-2-isopropylmalate + CoA + H(+). Its pathway is amino-acid biosynthesis; L-leucine biosynthesis; L-leucine from 3-methyl-2-oxobutanoate: step 1/4. In terms of biological role, catalyzes the condensation of the acetyl group of acetyl-CoA with 3-methyl-2-oxobutanoate (2-ketoisovalerate) to form 3-carboxy-3-hydroxy-4-methylpentanoate (2-isopropylmalate). The protein is 2-isopropylmalate synthase of Prochlorococcus marinus subsp. pastoris (strain CCMP1986 / NIES-2087 / MED4).